The sequence spans 345 residues: Solute carrier family 25 member 43 (345 aa).

Solcar repeat units lie at residues 11-100, 104-195, and 199-297; these read TSSQ…IDEL, SQWR…QERH, and TSLQ…LYRN. 6 helical membrane passes run 16 to 36, 67 to 87, 109 to 129, 165 to 185, 204 to 224, and 261 to 281; these read LMCVGFAGIFSKTVTSPLEVV, FWKGNMVSCLRLFPYSAIHLA, IVAGGLAGISAALATYPLEVV, GFSLTVLGAVPFSVGCYAVYI, FINGCLAAGVAQTLSFPFETV, and VMALWSGLTANMVKIVPYFGL.

It belongs to the mitochondrial carrier (TC 2.A.29) family.

The protein localises to the mitochondrion inner membrane. The sequence is that of Solute carrier family 25 member 43 (slc25a43) from Danio rerio (Zebrafish).